A 301-amino-acid polypeptide reads, in one-letter code: 4-hydroxy-tetrahydrodipicolinate synthase (301 aa).

Thr46 is a pyruvate binding site. The Proton donor/acceptor role is filled by Tyr135. Lys163 acts as the Schiff-base intermediate with substrate in catalysis. Ile205 serves as a coordination point for pyruvate.

It belongs to the DapA family. In terms of assembly, homotetramer; dimer of dimers.

Its subcellular location is the cytoplasm. The catalysed reaction is L-aspartate 4-semialdehyde + pyruvate = (2S,4S)-4-hydroxy-2,3,4,5-tetrahydrodipicolinate + H2O + H(+). Its pathway is amino-acid biosynthesis; L-lysine biosynthesis via DAP pathway; (S)-tetrahydrodipicolinate from L-aspartate: step 3/4. In terms of biological role, catalyzes the condensation of (S)-aspartate-beta-semialdehyde [(S)-ASA] and pyruvate to 4-hydroxy-tetrahydrodipicolinate (HTPA). This chain is 4-hydroxy-tetrahydrodipicolinate synthase, found in Lacticaseibacillus casei (strain BL23) (Lactobacillus casei).